The primary structure comprises 198 residues: Na(+)-translocating NADH-quinone reductase subunit E (198 aa).

6 helical membrane passes run 11-31 (AVFVENMALAFFLGMCTFLAV), 35-55 (VSTAFGLGIAVTVVLGISVPA), 77-97 (FLNFITFIGVIAAIVQVLEMI), 109-129 (LGIFLPLITVNCAIFGGVSFM), 140-160 (IVYGFGSGMGWMLAIVALAGI), and 176-196 (LGITFISTGLMALGFMSFAGV).

Belongs to the NqrDE/RnfAE family. As to quaternary structure, composed of six subunits; NqrA, NqrB, NqrC, NqrD, NqrE and NqrF.

It localises to the cell inner membrane. It catalyses the reaction a ubiquinone + n Na(+)(in) + NADH + H(+) = a ubiquinol + n Na(+)(out) + NAD(+). In terms of biological role, NQR complex catalyzes the reduction of ubiquinone-1 to ubiquinol by two successive reactions, coupled with the transport of Na(+) ions from the cytoplasm to the periplasm. NqrA to NqrE are probably involved in the second step, the conversion of ubisemiquinone to ubiquinol. This chain is Na(+)-translocating NADH-quinone reductase subunit E, found in Yersinia pestis bv. Antiqua (strain Nepal516).